The chain runs to 635 residues: MTNSNLRTENHFDYVKIKLASPERVMEWGQRTLPNGQVVGEVTKPETINYRTLKPEMDGLFCEKIFGPSKDWECHCGKYKRVRHRGIVCERCGVEVTESRVRRHRMGFIKLAAPVSHVWYLKGIPSYVAILLDMPLRDVEQIVYFNCYVVLDIGDSKDLKYKQLLTEDEWLEIEDEIYAEDSTIENEPIVGIGAEALKQLLEDLNLKEVAEQLREDIATSKGQKRAKLIKRLRVIDNFIATSASPEWMVLDAIPVIPPDLRPMVQLDGGRFATSDLNDLYRRVINRNNRLARLQEILAPEIIVRNEKRMLQEAVDALIDNGRRGRTVVGANNRPLKSLSDIIEGKQGRFRQNLLGKRVDYSGRSVIVVGPKLKMHQCGLPKEMAIELFQPFVIHRLIRQNIVNNIKAAKKLIQKADDEVMQVLQEVIEGHPILLNRAPTLHRLGIQAFEPKLVAGRAIQLHPLVCPAFNADFDGDQMAVHVPLAIEAQTEARMLMLASNNILSPATGDPIVTPSQDMVLGSYYLTAIQPQAKQPKFGDYSDTYASLEDVLQALEDKRIDLHDWVWVRFSGEIEDDDELQKPLKSETLKDGTRIEEWTYRRDRLDEDGSLISRYILTTVGRVVMNHTIIDAVAATS.

Zn(2+) contacts are provided by C74, C76, C89, and C92. Residues D471, D473, and D475 each coordinate Mg(2+).

Belongs to the RNA polymerase beta' chain family. RpoC1 subfamily. As to quaternary structure, in cyanobacteria the RNAP catalytic core is composed of 2 alpha, 1 beta, 1 beta', 1 gamma and 1 omega subunit. When a sigma factor is associated with the core the holoenzyme is formed, which can initiate transcription. Requires Mg(2+) as cofactor. Zn(2+) serves as cofactor.

It carries out the reaction RNA(n) + a ribonucleoside 5'-triphosphate = RNA(n+1) + diphosphate. Its function is as follows. DNA-dependent RNA polymerase catalyzes the transcription of DNA into RNA using the four ribonucleoside triphosphates as substrates. This Prochlorococcus marinus (strain NATL1A) protein is DNA-directed RNA polymerase subunit gamma.